A 76-amino-acid polypeptide reads, in one-letter code: Kappa-actitoxin-Avd4g (76 aa).

A signal peptide spans 1–19 (MNKALFLCLVVLCAAVVFA). Residues 20-31 (AEDLQKAKHAPF) constitute a propeptide that is removed on maturation. Intrachain disulfides connect cysteine 37–cysteine 72, cysteine 39–cysteine 65, and cysteine 55–cysteine 73.

The protein belongs to the sea anemone type 3 (BDS) potassium channel toxin family. In terms of tissue distribution, moderately expressed in the ectodermal tissue from the distal and proximal tentacles, body wall, and oral disk.

It localises to the secreted. The protein resides in the nematocyst. In terms of biological role, blocks Kv3 voltage-gated potassium channels. Reduces blood pressure. The polypeptide is Kappa-actitoxin-Avd4g (Anemonia viridis (Snakelocks anemone)).